A 785-amino-acid chain; its full sequence is uncharacterized protein (785 aa).

One can recognise a DOD-type homing endonuclease domain in the interval 293 to 421 (LVGYFLSEGY…LRLISLRLGF (129 aa)).

Post-translationally, this protein undergoes a protein self splicing that involves a post-translational excision of the intervening region (intein) followed by peptide ligation.

This is an uncharacterized protein from Methanocaldococcus jannaschii (strain ATCC 43067 / DSM 2661 / JAL-1 / JCM 10045 / NBRC 100440) (Methanococcus jannaschii).